A 735-amino-acid chain; its full sequence is Dolichyl-diphosphooligosaccharide--protein glycosyltransferase subunit STT3B (735 aa).

At methionine 1–glutamate 38 the chain is on the cytoplasmic side. The chain crosses the membrane as a helical span at residues leucine 39–phenylalanine 59. Topologically, residues serine 60–threonine 142 are lumenal. A DXD motif 1 motif is present at residues glutamate 70–aspartate 72. Aspartate 72 is a binding site for Mn(2+). The helical transmembrane segment at alanine 143 to leucine 161 threads the bilayer. Residues tryptophan 162–aspartate 163 lie on the Cytoplasmic side of the membrane. A helical membrane pass occupies residues threonine 164–isoleucine 181. Residues serine 182–glutamate 192 lie on the Lumenal side of the membrane. Residues aspartate 190 and glutamate 192 each coordinate Mn(2+). A DXD motif 2 motif is present at residues aspartate 190–glutamate 192. A helical transmembrane segment spans residues alanine 193–threonine 212. The Cytoplasmic portion of the chain corresponds to glycine 213–serine 214. The chain crosses the membrane as a helical span at residues leucine 215 to valine 229. Over serine 230–glycine 234 the chain is Lumenal. A helical membrane pass occupies residues tyrosine 235 to isoleucine 251. Residues threonine 252 to serine 256 are Cytoplasmic-facing. Residues methionine 257–phenylalanine 282 form a helical membrane-spanning segment. At glutamine 283 to histidine 290 the chain is on the lumenal side. A helical transmembrane segment spans residues methionine 291 to lysine 310. Residues tyrosine 311–threonine 326 lie on the Cytoplasmic side of the membrane. The helical transmembrane segment at valine 327 to isoleucine 347 threads the bilayer. Topologically, residues serine 348–alanine 380 are lumenal. Positions serine 372–glutamate 375 match the SVSE motif motif. The chain crosses the membrane as a helical span at residues tryptophan 381–phenylalanine 403. Topologically, residues lysine 404–alanine 409 are cytoplasmic. The helical transmembrane segment at threonine 410 to valine 426 threads the bilayer. Over methionine 427–leucine 430 the chain is Lumenal. A dolichyl diphosphooligosaccharide-binding site is contributed by arginine 429. Residues isoleucine 431–asparagine 452 traverse the membrane as a helical segment. The Cytoplasmic portion of the chain corresponds to leucine 453–alanine 494. Residues isoleucine 495–valine 515 traverse the membrane as a helical segment. Residues threonine 516–leucine 735 lie on the Lumenal side of the membrane. Positions tryptophan 562–aspartate 564 are interacts with target acceptor peptide in protein substrate. The short motif at tryptophan 562–glycine 566 is the WWDYG motif element. Tyrosine 567 contacts dolichyl diphosphooligosaccharide. N-linked (GlcNAc...) asparagine glycosylation is found at asparagine 574 and asparagine 581. Asparagine 585 carries an N-linked (GlcNAc...) (high mannose) asparagine glycan. Positions aspartate 629–methionine 636 match the DK motif motif.

This sequence belongs to the STT3 family. As to quaternary structure, component of the oligosaccharyltransferase (OST) complex. The cofactor is Mg(2+). Requires Mn(2+) as cofactor. As to expression, expressed preferentially in the root but also in the shoot.

The protein resides in the endoplasmic reticulum membrane. The catalysed reaction is a di-trans,poly-cis-dolichyl diphosphooligosaccharide + L-asparaginyl-[protein] = N(4)-(oligosaccharide-(1-&gt;4)-N-acetyl-beta-D-glucosaminyl-(1-&gt;4)-N-acetyl-beta-D-glucosaminyl)-L-asparaginyl-[protein] + a di-trans,poly-cis-dolichyl diphosphate + H(+). It functions in the pathway protein modification; protein glycosylation. Its function is as follows. Catalytic subunit of the oligosaccharyl transferase (OST) complex that catalyzes the initial transfer of a defined glycan (Glc(3)Man(9)GlcNAc(2) in eukaryotes) from the lipid carrier dolichol-pyrophosphate to an asparagine residue within an Asn-X-Ser/Thr consensus motif in nascent polypeptide chains, the first step in protein N-glycosylation. N-glycosylation occurs cotranslationally and the complex associates with the Sec61 complex at the channel-forming translocon complex that mediates protein translocation across the endoplasmic reticulum (ER). All subunits are required for a maximal enzyme activity. This subunit contains the active site and the acceptor peptide and donor lipid-linked oligosaccharide (LLO) binding pockets. The sequence is that of Dolichyl-diphosphooligosaccharide--protein glycosyltransferase subunit STT3B (STT3B) from Arabidopsis thaliana (Mouse-ear cress).